We begin with the raw amino-acid sequence, 389 residues long: Succinyl-diaminopimelate desuccinylase (389 aa).

H72 provides a ligand contact to Zn(2+). D74 is a catalytic residue. Position 105 (D105) interacts with Zn(2+). E144 serves as the catalytic Proton acceptor. The Zn(2+) site is built by E145, E173, and H362.

This sequence belongs to the peptidase M20A family. DapE subfamily. As to quaternary structure, homodimer. Zn(2+) serves as cofactor. It depends on Co(2+) as a cofactor.

It carries out the reaction N-succinyl-(2S,6S)-2,6-diaminopimelate + H2O = (2S,6S)-2,6-diaminopimelate + succinate. It functions in the pathway amino-acid biosynthesis; L-lysine biosynthesis via DAP pathway; LL-2,6-diaminopimelate from (S)-tetrahydrodipicolinate (succinylase route): step 3/3. Functionally, catalyzes the hydrolysis of N-succinyl-L,L-diaminopimelic acid (SDAP), forming succinate and LL-2,6-diaminopimelate (DAP), an intermediate involved in the bacterial biosynthesis of lysine and meso-diaminopimelic acid, an essential component of bacterial cell walls. In Rhodopseudomonas palustris (strain HaA2), this protein is Succinyl-diaminopimelate desuccinylase.